Reading from the N-terminus, the 282-residue chain is Elongation factor Ts (282 aa).

The involved in Mg(2+) ion dislocation from EF-Tu stretch occupies residues 80–83 (TDFV).

Belongs to the EF-Ts family.

It localises to the cytoplasm. In terms of biological role, associates with the EF-Tu.GDP complex and induces the exchange of GDP to GTP. It remains bound to the aminoacyl-tRNA.EF-Tu.GTP complex up to the GTP hydrolysis stage on the ribosome. In Aliivibrio salmonicida (strain LFI1238) (Vibrio salmonicida (strain LFI1238)), this protein is Elongation factor Ts.